A 60-amino-acid polypeptide reads, in one-letter code: Large ribosomal subunit protein bL32 (60 aa).

The tract at residues 1–44 (MAVQQNKKSRSARDMRRSHDALSENALSVEKTTGEVHLRHHVSP) is disordered. The span at 11–22 (SARDMRRSHDAL) shows a compositional bias: basic and acidic residues.

This sequence belongs to the bacterial ribosomal protein bL32 family.

This Pseudomonas putida (strain W619) protein is Large ribosomal subunit protein bL32.